The chain runs to 122 residues: Large ribosomal subunit protein uL14 (122 aa).

Belongs to the universal ribosomal protein uL14 family. In terms of assembly, part of the 50S ribosomal subunit. Forms a cluster with proteins L3 and L19. In the 70S ribosome, L14 and L19 interact and together make contacts with the 16S rRNA in bridges B5 and B8.

Functionally, binds to 23S rRNA. Forms part of two intersubunit bridges in the 70S ribosome. This chain is Large ribosomal subunit protein uL14, found in Methylococcus capsulatus (strain ATCC 33009 / NCIMB 11132 / Bath).